The primary structure comprises 366 residues: Aminomethyltransferase (366 aa).

The protein belongs to the GcvT family. The glycine cleavage system is composed of four proteins: P, T, L and H.

It catalyses the reaction N(6)-[(R)-S(8)-aminomethyldihydrolipoyl]-L-lysyl-[protein] + (6S)-5,6,7,8-tetrahydrofolate = N(6)-[(R)-dihydrolipoyl]-L-lysyl-[protein] + (6R)-5,10-methylene-5,6,7,8-tetrahydrofolate + NH4(+). In terms of biological role, the glycine cleavage system catalyzes the degradation of glycine. The chain is Aminomethyltransferase from Bordetella pertussis (strain Tohama I / ATCC BAA-589 / NCTC 13251).